The primary structure comprises 515 residues: SWI/SNF-related matrix-associated actin-dependent regulator of chromatin subfamily D member 1 (515 aa).

A disordered region spans residues 1–128 (MAARAGFQSV…RNHNAKKKKM (128 aa)). A compositionally biased stretch (gly residues) spans 14–23 (GGAGASGGAG). The segment at 43–167 (APGQGLYRSP…DQTIMRKRLD (125 aa)) is interaction with ESR1, NR1H4, NR3C1, PGR and SMARCA4. 2 positions are modified to asymmetric dimethylarginine: Arg68 and Arg88. Residue Lys101 forms a Glycyl lysine isopeptide (Lys-Gly) (interchain with G-Cter in SUMO2) linkage. Positions 103–117 (PAPQQIKQVQQQAVQ) are enriched in low complexity. The interval 168 to 474 (IQEALKRPIK…VMTDVVGNSE (307 aa)) is interaction with SMARCC1 and SMARCC2. Residues 180-515 (RKLRIFISNT…LEQALGIRNT (336 aa)) are necessary for GR/NR3C1-mediated remodeling and transcription from chromatin; required for GR/NR3C1 interaction with the BRG1/SMARCA4 complex in vivo. At Thr203 the chain carries Phosphothreonine. Position 223 is an N6-acetyllysine (Lys223). Residues 290-367 (YQPPQFKLDP…PQRLHALLMP (78 aa)) form the SWIB/MDM2 domain. Positions 412-440 (ASQQEIATLDNKIHETIETINQLKTQREF) form a coiled coil.

This sequence belongs to the SMARCD family. Component of the multiprotein chromatin-remodeling complexes SWI/SNF: SWI/SNF-A (BAF), SWI/SNF-B (PBAF) and related complexes. The canonical complex contains a catalytic subunit (either SMARCA4/BRG1/BAF190A or SMARCA2/BRM/BAF190B), and at least SMARCE1, ACTL6A/BAF53, SMARCC1/BAF155, SMARCC2/BAF170, and SMARCB1/SNF5/BAF47. Other subunits specific to each of the complexes may also be present permitting several possible combinations developmentally and tissue specific. Component of the BAF complex, which includes at least actin (ACTB), ARID1A/BAF250A, ARID1B/BAF250B, SMARCA2/BRM, SMARCA4/BRG1/BAF190A, ACTL6A/BAF53, ACTL6B/BAF53B, SMARCE1/BAF57, SMARCC1/BAF155, SMARCC2/BAF170, SMARCB1/SNF5/INI1, and one or more SMARCD1/BAF60A, SMARCD2/BAF60B, or SMARCD3/BAF60C. In muscle cells, the BAF complex also contains DPF3. Component of neural progenitors-specific chromatin remodeling complex (npBAF complex) composed of at least, ARID1A/BAF250A or ARID1B/BAF250B, SMARCD1/BAF60A, SMARCD3/BAF60C, SMARCA2/BRM/BAF190B, SMARCA4/BRG1/BAF190A, SMARCB1/BAF47, SMARCC1/BAF155, SMARCE1/BAF57, SMARCC2/BAF170, PHF10/BAF45A, ACTL6A/BAF53A and actin. Component of neuron-specific chromatin remodeling complex (nBAF complex) composed of at least, ARID1A/BAF250A or ARID1B/BAF250B, SMARCD1/BAF60A, SMARCD3/BAF60C, SMARCA2/BRM/BAF190B, SMARCA4/BRG1/BAF190A, SMARCB1/BAF47, SMARCC1/BAF155, SMARCE1/BAF57, SMARCC2/BAF170, DPF1/BAF45B, DPF3/BAF45C, ACTL6B/BAF53B and actin. Component of the SWI/SNF-B (PBAF) chromatin remodeling complex, at least composed of SMARCA4/BRG1, SMARCB1/BAF47/SNF5, ACTL6A/BAF53A or ACTL6B/BAF53B, SMARCE1/BAF57, SMARCD1/BAF60A, SMARCD2/BAF60B, perhaps SMARCD3/BAF60C, SMARCC1/BAF155, SMARCC2/BAF170, PBRM1/BAF180, ARID2/BAF200 and actin (ACTB). Component of SWI/SNF (GBAF) subcomplex, which includes at least BICRA or BICRAL (mutually exclusive), BRD9, SS18, SMARCA2/BRM, SMARCA4/BRG1/BAF190A, ACTL6A/BAF53, SMARCC1/BAF155, and SMARCD1/BAF60A. Specifically interacts with the VDR heterodimer complex. Interacts with ESR1, NR3C1, NR1H4, PGR, SMARCA4, SMARCC1 and SMARCC2. Interacts with DPF2. Interacts with FOS, FOSB, FOSL1 and FOSL2.

It is found in the nucleus. Involved in transcriptional activation and repression of select genes by chromatin remodeling (alteration of DNA-nucleosome topology). Component of SWI/SNF chromatin remodeling complexes that carry out key enzymatic activities, changing chromatin structure by altering DNA-histone contacts within a nucleosome in an ATP-dependent manner. Belongs to the neural progenitors-specific chromatin remodeling complex (npBAF complex) and the neuron-specific chromatin remodeling complex (nBAF complex). During neural development a switch from a stem/progenitor to a postmitotic chromatin remodeling mechanism occurs as neurons exit the cell cycle and become committed to their adult state. The transition from proliferating neural stem/progenitor cells to postmitotic neurons requires a switch in subunit composition of the npBAF and nBAF complexes. As neural progenitors exit mitosis and differentiate into neurons, npBAF complexes which contain ACTL6A/BAF53A and PHF10/BAF45A, are exchanged for homologous alternative ACTL6B/BAF53B and DPF1/BAF45B or DPF3/BAF45C subunits in neuron-specific complexes (nBAF). The npBAF complex is essential for the self-renewal/proliferative capacity of the multipotent neural stem cells. The nBAF complex along with CREST plays a role regulating the activity of genes essential for dendrite growth. Has a strong influence on vitamin D-mediated transcriptional activity from an enhancer vitamin D receptor element (VDRE). May be a link between mammalian SWI-SNF-like chromatin remodeling complexes and the vitamin D receptor (VDR) heterodimer. Mediates critical interactions between nuclear receptors and the BRG1/SMARCA4 chromatin-remodeling complex for transactivation. Interacts with AKIRIN2. This Bos taurus (Bovine) protein is SWI/SNF-related matrix-associated actin-dependent regulator of chromatin subfamily D member 1 (SMARCD1).